Reading from the N-terminus, the 465-residue chain is tRNA modification GTPase MnmE (465 aa).

(6S)-5-formyl-5,6,7,8-tetrahydrofolate-binding residues include Arg-21, Glu-85, and Lys-124. Residues 220 to 387 form the TrmE-type G domain; the sequence is GVPVAIIGET…LQKMLINAAH (168 aa). Asn-230 contributes to the K(+) binding site. Residues 230-235, 249-255, 274-277, and 337-340 each bind GTP; these read NAGKST, SDIHGTT, DTAG, and NKAD. Mg(2+) is bound at residue Ser-234. 3 residues coordinate K(+): Ser-249, Ile-251, and Thr-254. Thr-255 is a binding site for Mg(2+). Lys-465 provides a ligand contact to (6S)-5-formyl-5,6,7,8-tetrahydrofolate.

This sequence belongs to the TRAFAC class TrmE-Era-EngA-EngB-Septin-like GTPase superfamily. TrmE GTPase family. In terms of assembly, homodimer. Heterotetramer of two MnmE and two MnmG subunits. K(+) serves as cofactor.

Its subcellular location is the cytoplasm. In terms of biological role, exhibits a very high intrinsic GTPase hydrolysis rate. Involved in the addition of a carboxymethylaminomethyl (cmnm) group at the wobble position (U34) of certain tRNAs, forming tRNA-cmnm(5)s(2)U34. This Bacteroides thetaiotaomicron (strain ATCC 29148 / DSM 2079 / JCM 5827 / CCUG 10774 / NCTC 10582 / VPI-5482 / E50) protein is tRNA modification GTPase MnmE.